Reading from the N-terminus, the 68-residue chain is Large ribosomal subunit protein bL31 (68 aa).

Zn(2+)-binding residues include Cys-16, Cys-18, Cys-36, and Cys-39.

The protein belongs to the bacterial ribosomal protein bL31 family. Type A subfamily. Part of the 50S ribosomal subunit. The cofactor is Zn(2+).

Its function is as follows. Binds the 23S rRNA. The chain is Large ribosomal subunit protein bL31 from Dictyoglomus thermophilum (strain ATCC 35947 / DSM 3960 / H-6-12).